We begin with the raw amino-acid sequence, 470 residues long: ATP-dependent protease ATPase subunit HslU (470 aa).

ATP is bound by residues Val22 and 64–69 (GVGKTE). The tract at residues 145 to 187 (KKANNNTNSNNPLESLFGGSIPNFGQNNDDEEETPTDEVKTKR) is disordered. Asp283, Glu348, and Arg420 together coordinate ATP.

The protein belongs to the ClpX chaperone family. HslU subfamily. As to quaternary structure, a double ring-shaped homohexamer of HslV is capped on each side by a ring-shaped HslU homohexamer. The assembly of the HslU/HslV complex is dependent on binding of ATP.

It is found in the cytoplasm. ATPase subunit of a proteasome-like degradation complex; this subunit has chaperone activity. The binding of ATP and its subsequent hydrolysis by HslU are essential for unfolding of protein substrates subsequently hydrolyzed by HslV. HslU recognizes the N-terminal part of its protein substrates and unfolds these before they are guided to HslV for hydrolysis. The sequence is that of ATP-dependent protease ATPase subunit HslU from Staphylococcus saprophyticus subsp. saprophyticus (strain ATCC 15305 / DSM 20229 / NCIMB 8711 / NCTC 7292 / S-41).